Consider the following 235-residue polypeptide: Orotidine 5'-phosphate decarboxylase (235 aa).

Residues aspartate 17, lysine 39, 66–75 (DLKLHDIGNT), threonine 121, arginine 182, glutamine 191, glycine 211, and arginine 212 each bind substrate. Lysine 68 serves as the catalytic Proton donor.

Belongs to the OMP decarboxylase family. Type 1 subfamily. Homodimer.

The catalysed reaction is orotidine 5'-phosphate + H(+) = UMP + CO2. It participates in pyrimidine metabolism; UMP biosynthesis via de novo pathway; UMP from orotate: step 2/2. Its function is as follows. Catalyzes the decarboxylation of orotidine 5'-monophosphate (OMP) to uridine 5'-monophosphate (UMP). The chain is Orotidine 5'-phosphate decarboxylase from Afipia carboxidovorans (strain ATCC 49405 / DSM 1227 / KCTC 32145 / OM5) (Oligotropha carboxidovorans).